The following is a 67-amino-acid chain: Coiled-coil domain-containing protein 179 (67 aa).

2 disordered regions span residues 1 to 32 and 47 to 67; these read MCLR…RQSV and RKLG…ILWT. Positions 27–53 form a coiled coil; that stretch reads STRQSVEKRINYMQNLQKEKRKLGKRF.

In Mus musculus (Mouse), this protein is Coiled-coil domain-containing protein 179 (Ccdc179).